The primary structure comprises 130 residues: Small ribosomal subunit protein uS11 (130 aa).

This sequence belongs to the universal ribosomal protein uS11 family. As to quaternary structure, part of the 30S ribosomal subunit. Interacts with proteins S7 and S18. Binds to IF-3.

Its function is as follows. Located on the platform of the 30S subunit, it bridges several disparate RNA helices of the 16S rRNA. Forms part of the Shine-Dalgarno cleft in the 70S ribosome. This is Small ribosomal subunit protein uS11 from Psychrobacter sp. (strain PRwf-1).